We begin with the raw amino-acid sequence, 477 residues long: Stromelysin-1 (477 aa).

Positions 1–17 (MKSLPILLLLCVAVCSA) are cleaved as a signal peptide. Positions 18-99 (YPLDGAARGE…PRCGVPDVGH (82 aa)) are cleaved as a propeptide — activation peptide. The Cysteine switch signature appears at 90 to 97 (PRCGVPDV). C92 provides a ligand contact to Zn(2+). D124 and D158 together coordinate Ca(2+). Residues H168 and D170 each coordinate Zn(2+). D175, G176, G178, and V180 together coordinate Ca(2+). H183 contacts Zn(2+). G190, N192, and D194 together coordinate Ca(2+). H196 is a binding site for Zn(2+). The Ca(2+) site is built by D198, D199, and E201. Position 218 (H218) interacts with Zn(2+). E219 is an active-site residue. 2 residues coordinate Zn(2+): H222 and H228. The tract at residues 262–287 (LYGPPPDSPETPLVPTEPVPPEPGTP) is disordered. A compositionally biased stretch (pro residues) spans 276-285 (PTEPVPPEPG). 4 Hemopexin repeats span residues 287–336 (PANC…WPSL), 337–383 (PSGV…GFPP), 385–433 (VRKI…FPGI), and 434–477 (DSKI…WLNC). The cysteines at positions 290 and 477 are disulfide-linked. D297 is a binding site for Ca(2+). The Ca(2+) site is built by D389 and D438.

It belongs to the peptidase M10A family. Requires Ca(2+) as cofactor. Zn(2+) serves as cofactor. In terms of processing, directly cleaved by HTRA2 to produce active form.

The protein localises to the secreted. It is found in the extracellular space. Its subcellular location is the extracellular matrix. The protein resides in the nucleus. It localises to the cytoplasm. It catalyses the reaction Preferential cleavage where P1', P2' and P3' are hydrophobic residues.. With respect to regulation, enzymatic activity is activated by HTRA2 in dopaminergic cells upon mitochondrial stress. Its function is as follows. Metalloproteinase with a rather broad substrate specificity that can degrade fibronectin, laminin, gelatins of type I, III, IV, and V; collagens III, IV, X, and IX, and cartilage proteoglycans. Activates different molecules including growth factors, plasminogen or other matrix metalloproteinases such as MMP9. Once released into the extracellular matrix (ECM), the inactive pro-enzyme is activated by the plasmin cascade signaling pathway. Also acts intracellularly. For example, in dopaminergic neurons, gets activated by the serine protease HTRA2 upon stress and plays a pivotal role in DA neuronal degeneration by mediating microglial activation and alpha-synuclein/SNCA cleavage. In addition, plays a role in immune response and possesses antiviral activity against various viruses such as vesicular stomatitis virus, influenza A virus (H1N1) and human herpes virus 1. Mechanistically, translocates from the cytoplasm into the cell nucleus upon virus infection to influence NF-kappa-B activities. This Homo sapiens (Human) protein is Stromelysin-1 (MMP3).